A 212-amino-acid chain; its full sequence is Ribosomal RNA large subunit methyltransferase E (212 aa).

Basic residues predominate over residues 1-10 (MATCRRRRRG). The tract at residues 1–24 (MATCRRRRRGCNSQARRSRHESDP) is disordered. S-adenosyl-L-methionine-binding residues include glycine 66, tryptophan 68, aspartate 86, aspartate 102, and aspartate 127. Lysine 167 serves as the catalytic Proton acceptor.

Belongs to the class I-like SAM-binding methyltransferase superfamily. RNA methyltransferase RlmE family.

The protein localises to the cytoplasm. The enzyme catalyses uridine(2552) in 23S rRNA + S-adenosyl-L-methionine = 2'-O-methyluridine(2552) in 23S rRNA + S-adenosyl-L-homocysteine + H(+). Its function is as follows. Specifically methylates the uridine in position 2552 of 23S rRNA at the 2'-O position of the ribose in the fully assembled 50S ribosomal subunit. The polypeptide is Ribosomal RNA large subunit methyltransferase E (Halorhodospira halophila (strain DSM 244 / SL1) (Ectothiorhodospira halophila (strain DSM 244 / SL1))).